Here is a 526-residue protein sequence, read N- to C-terminus: Catalase (526 aa).

A compositionally biased stretch (basic and acidic residues) spans 1 to 22 (MADDREKSTDQMKLWKEGRGSQ). A disordered region spans residues 1–29 (MADDREKSTDQMKLWKEGRGSQRPDVLTT). Residues His75 and Asn148 contribute to the active site. The NADP(+) site is built by His194, Ser201, Arg203, Asn213, Lys237, Trp303, His305, and Lys306. Position 358 (Tyr358) interacts with heme.

Belongs to the catalase family. Homotetramer. Requires heme as cofactor. NADP(+) is required as a cofactor.

Its subcellular location is the peroxisome matrix. It catalyses the reaction 2 H2O2 = O2 + 2 H2O. Catalyzes the degradation of hydrogen peroxide (H(2)O(2)) generated by peroxisomal oxidases to water and oxygen, thereby protecting cells from the toxic effects of hydrogen peroxide. This chain is Catalase (cat), found in Danio rerio (Zebrafish).